Consider the following 445-residue polypeptide: Damage suppressor protein (445 aa).

Polar residues-rich tracts occupy residues 1-15 (MAST…SSTG) and 25-47 (SQGS…SATS). Disordered regions lie at residues 1–145 (MAST…HSVI) and 203–445 (YHSV…RKRK). Residues 61-73 (SSTTAGSSSTQGQ) are compositionally biased toward low complexity. Polar residues predominate over residues 74 to 87 (KFSTTPTDPKTFSS). The span at 88–97 (DQKEKSKSPA) shows a compositional bias: basic and acidic residues. Positions 117-138 (DAKSSGQSQGQSKDSGKSSSDS) are enriched in low complexity. Residues 207–228 (VGDKTDDKKEGEHSGDKKDDSK) show a composition bias toward basic and acidic residues. A required and sufficient for DNA-binding and co-localization with nuclear DNA region spans residues 208–445 (GDKTDDKKEG…GGKAGGRKRK (238 aa)). The span at 245 to 256 (ETSGQAESSSGN) shows a compositional bias: polar residues. A compositionally biased stretch (low complexity) spans 257 to 306 (EGAAPAKGRGRGRPPAAAKGVAKGAAKGAAASKGAKSGAESSKGGEQSSG). Gly residues predominate over residues 329-338 (GEGGASGSEG). Residues 360–445 (EPPRRSSRLT…GGKAGGRKRK (86 aa)) form a required for nucleosome binding and for the protection of chromatin from hydroxyl radical-mediated DNA damage region. Low complexity predominate over residues 367–431 (RLTSSGTGAG…ASKAPQNGAG (65 aa)). A compositionally biased stretch (basic residues) spans 432–445 (AKKKGGKAGGRKRK).

It localises to the nucleus. Its function is as follows. Unique chromatin-associating protein that contributes to the organism's exceptional tolerance to harsh environmental stresses. Binds with a higher affinity to nucleosomes than to free DNA. Protects chromatin from damage caused by hydroxyl radical-mediated cleavage induced by X-rays or treatment with hydrogen peroxide. Suppresses X-ray-induced DNA damage that includes single-strand breaks (SSBs) as well as more hazardous double-strand breaks (DSBs), and improves radiotolerance. Also shields DNA against reactive oxygen species (ROS). This chain is Damage suppressor protein, found in Ramazzottius varieornatus (Water bear).